Here is a 62-residue protein sequence, read N- to C-terminus: Photosystem II reaction center protein Z (62 aa).

The next 2 membrane-spanning stretches (helical) occupy residues 8-28 (AVFA…VVFA) and 41-61 (FSGT…NSLI).

The protein belongs to the PsbZ family. As to quaternary structure, PSII is composed of 1 copy each of membrane proteins PsbA, PsbB, PsbC, PsbD, PsbE, PsbF, PsbH, PsbI, PsbJ, PsbK, PsbL, PsbM, PsbT, PsbY, PsbZ, Psb30/Ycf12, at least 3 peripheral proteins of the oxygen-evolving complex and a large number of cofactors. It forms dimeric complexes.

It is found in the plastid. It localises to the chloroplast thylakoid membrane. Functionally, may control the interaction of photosystem II (PSII) cores with the light-harvesting antenna, regulates electron flow through the 2 photosystem reaction centers. PSII is a light-driven water plastoquinone oxidoreductase, using light energy to abstract electrons from H(2)O, generating a proton gradient subsequently used for ATP formation. In Piper cenocladum (Ant piper), this protein is Photosystem II reaction center protein Z.